A 143-amino-acid chain; its full sequence is Large-conductance mechanosensitive channel (143 aa).

2 consecutive transmembrane segments (helical) span residues 10 to 30 and 89 to 109; these read FAVK…GAFS and GSFI…FLMV.

This sequence belongs to the MscL family. In terms of assembly, homopentamer.

It localises to the cell inner membrane. Its function is as follows. Channel that opens in response to stretch forces in the membrane lipid bilayer. May participate in the regulation of osmotic pressure changes within the cell. The chain is Large-conductance mechanosensitive channel from Burkholderia pseudomallei (strain 668).